Here is a 110-residue protein sequence, read N- to C-terminus: uncharacterized protein (110 aa).

Positions 85–110 (ARKAERPSQGGKDYNGTAKSAQSTTV) are disordered. Over residues 101 to 110 (TAKSAQSTTV) the composition is skewed to polar residues.

This is an uncharacterized protein from Saccharomyces cerevisiae (strain ATCC 204508 / S288c) (Baker's yeast).